Reading from the N-terminus, the 318-residue chain is Transaldolase (318 aa).

The Schiff-base intermediate with substrate role is filled by lysine 132.

This sequence belongs to the transaldolase family. Type 1 subfamily. In terms of assembly, homodimer.

It is found in the cytoplasm. It catalyses the reaction D-sedoheptulose 7-phosphate + D-glyceraldehyde 3-phosphate = D-erythrose 4-phosphate + beta-D-fructose 6-phosphate. The protein operates within carbohydrate degradation; pentose phosphate pathway; D-glyceraldehyde 3-phosphate and beta-D-fructose 6-phosphate from D-ribose 5-phosphate and D-xylulose 5-phosphate (non-oxidative stage): step 2/3. Functionally, transaldolase is important for the balance of metabolites in the pentose-phosphate pathway. The polypeptide is Transaldolase (Shewanella baltica (strain OS155 / ATCC BAA-1091)).